Here is a 173-residue protein sequence, read N- to C-terminus: C-phycocyanin beta subunit (173 aa).

Asn73 carries the post-translational modification N4-methylasparagine. Residues Cys83 and Cys154 each contribute to the (2R,3E)-phycocyanobilin site.

It belongs to the phycobiliprotein family. Heterodimer of an alpha and a beta subunit. Heterodimers further assemble into trimers and the trimers into hexamers. Post-translationally, contains two covalently linked bilin chromophores.

The protein localises to the cellular thylakoid membrane. Its function is as follows. Light-harvesting photosynthetic bile pigment-protein from the phycobiliprotein complex (phycobilisome, PBS). Phycocyanin is the major phycobiliprotein in the PBS rod. In Mastigocladus laminosus (Fischerella sp.), this protein is C-phycocyanin beta subunit (cpcB).